The chain runs to 468 residues: MATEYALRMGDGKRIFLTKEKIREELEAGAANAADLGEIPALSGDEIDRLAEILMMPGKAVSVEQGMEVPVTHDIGTIRLDGDQGNSGVGIPSSRLVGCMMHERAFGADTMELGHIDYSFKPVKPVVSNECQAMEVCQQNMIIPLFYGAMPNMGLYYTPDGPFENPGDLMKAFKIQEAWESMEHAADHLTRDTVWIMQKLFASGADGVNFDTTAAAGDGDFYGTLHAVEALRKEFPAMHIEVGMAGEMVLGMHGNLQYEGVTLAGLWPHQQASLVAKAGANVFGPVVNTNTSKTSPWNLARAVTFIKEAVKVSSLPCHVDMGMGVGGIPMLETPPIDAVTRASKAMVEVAGVDGIOIGVGDPLGMPISHIMASGMTGIRAAGDLVARMQFSKNMRIKEAKKYVAKKLDVDVMDLADEHVMRELREELDIGVITSVPGAAKGIAAKMNIEKLLDVRINSCELFRKQTGR.

Position 356 (O356) is a non-standard amino acid, pyrrolysine.

Belongs to the dimethylamine methyltransferase family.

It carries out the reaction Co(I)-[dimethylamine-specific corrinoid protein] + dimethylamine + H(+) = methyl-Co(III)-[dimethylamine-specific corrinoid protein] + methylamine. Its pathway is one-carbon metabolism; methanogenesis from dimethylamine. Functionally, catalyzes the transfer of a methyl group from dimethylamine to the corrinoid cofactor of MtbC. The polypeptide is Dimethylamine methyltransferase MtbB2 (mtbB2) (Methanosarcina acetivorans (strain ATCC 35395 / DSM 2834 / JCM 12185 / C2A)).